The sequence spans 573 residues: Sulfate adenylyltransferase (573 aa).

The segment at 1–169 (MSNPPHGGVL…LEAVNKLQHY (169 aa)) is N-terminal. Residues 170–394 (DFVDLRYSPA…LRESHPPRSQ (225 aa)) form a catalytic region. Residue Gln197 participates in sulfate binding. ATP is bound by residues 197–200 (QTRN) and 291–294 (GRDH). Catalysis depends on residues Thr198, Arg199, and Asn200. Arg199 contacts sulfate. Residue Ala295 coordinates sulfate. ATP is bound at residue Met333. Residues 395–573 (QGFTVLFTGY…LESQGLLDRF (179 aa)) form an allosteric regulation domain; adenylyl-sulfate kinase-like region. 3'-phosphoadenylyl sulfate is bound by residues 434–437 (ENIR), Arg451, 477–478 (IA), and Arg515.

It in the N-terminal section; belongs to the sulfate adenylyltransferase family. This sequence in the C-terminal section; belongs to the APS kinase family. As to quaternary structure, homohexamer. Dimer of trimers.

The protein localises to the cytoplasm. It carries out the reaction sulfate + ATP + H(+) = adenosine 5'-phosphosulfate + diphosphate. The protein operates within sulfur metabolism; hydrogen sulfide biosynthesis; sulfite from sulfate: step 1/3. With respect to regulation, allosterically inhibited by 3'-phosphoadenosine 5'-phosphosulfate (PAPS). Functionally, catalyzes the first intracellular reaction of sulfate assimilation, forming adenosine-5'-phosphosulfate (APS) from inorganic sulfate and ATP. Plays an important role in sulfate activation as a component of the biosynthesis pathway of sulfur-containing amino acids. The protein is Sulfate adenylyltransferase (cys-11) of Neurospora crassa (strain ATCC 24698 / 74-OR23-1A / CBS 708.71 / DSM 1257 / FGSC 987).